The sequence spans 470 residues: ATP synthase subunit beta (470 aa).

155 to 162 (GGAGVGKT) is a binding site for ATP.

Belongs to the ATPase alpha/beta chains family. In terms of assembly, F-type ATPases have 2 components, CF(1) - the catalytic core - and CF(0) - the membrane proton channel. CF(1) has five subunits: alpha(3), beta(3), gamma(1), delta(1), epsilon(1). CF(0) has three main subunits: a(1), b(2) and c(9-12). The alpha and beta chains form an alternating ring which encloses part of the gamma chain. CF(1) is attached to CF(0) by a central stalk formed by the gamma and epsilon chains, while a peripheral stalk is formed by the delta and b chains.

It is found in the cell membrane. The catalysed reaction is ATP + H2O + 4 H(+)(in) = ADP + phosphate + 5 H(+)(out). In terms of biological role, produces ATP from ADP in the presence of a proton gradient across the membrane. The catalytic sites are hosted primarily by the beta subunits. The chain is ATP synthase subunit beta from Staphylococcus saprophyticus subsp. saprophyticus (strain ATCC 15305 / DSM 20229 / NCIMB 8711 / NCTC 7292 / S-41).